We begin with the raw amino-acid sequence, 746 residues long: Tudor domain-containing protein krimp (746 aa).

The interval 1 to 310 (MNLEDISMIM…RDIYNQILKD (310 aa)) is involved in homooligomerization. The segment at 311–489 (MAAFPENTIV…PAGITEDDMA (179 aa)) is non-canonical tudor domain. The C3H1-type zinc-finger motif lies at 511–540 (KDEQRICRHYDPKLNGCFKGNNCRFAHEPF). Residues 613–670 (KPRLLDIVLALYSDGCFYRAQIIDEFPSEYMIFYVDYGNTEFVPLSCLAPCENVDSFK) enclose the Tudor domain.

This sequence belongs to the Tudor domain containing protein family. In terms of assembly, homooligomerizes (via N-terminus). Component of the ping-pong piRNA processing (4P) complex consisting of krimp, aub and AGO3; a single molecule of krimp can bind both aub and AGO3 without the need for homooligomerization. Interacts (via canonical tudor domain) with aub (via N-terminus when symmetrically dimethylated on arginine residues). Interacts (via non-canonical tudor domain) with AGO3 (via N-terminus when unmethylated on arginine residues); this interaction leads to symmetrical dimethylation on AGO3 arginine residues and its subsequent dissociation from krimp. Krimp associated AGO3 is mostly free of piRNA binding and the interaction plays an important role in the loading of AGO3 with piRNAs; piRNA binding stimulates methylation of ACO3 by the csul/PRMT5 methylosome complex and promotes dissociation of the two proteins. In terms of tissue distribution, widely expressed in female germline cells, including differentiating germ cells in germarium and egg chambers (at protein level).

Its subcellular location is the cytoplasm. It is found in the perinuclear region. The protein localises to the cytoplasmic ribonucleoprotein granule. Stable structural component of the perinuclear meiotic nuage, a germline-specific subcellular membraneless ribonucleoprotein compartment involved in production of transposable element-repressing Piwi-interacting RNA (piRNA)-induced silencing complexes (piRISCs), which are essential for maintaining germline integrity during oogenesis. Scaffold component of the ping-pong piRNA processing (4P) complex that recruits the Piwi proteins aub and AGO3 to specific subregions of the nuage where it coordinates their activity in the ping-pong amplification step of secondary piRNA biogenesis. Binds methylated aub, which is associated with piRNA, and unmethylated AGO3, which is not associated with piRNA, bringing the Piwi proteins into close proximity and facilitating the loading of freshly cut piRNAs generated by aub onto AGO3. Promotes asymmetric ping-pong amplification by aub and AGO3 to bias production towards antisense piRNAs capable of silencing transposable elements. Required for symmetrical dimethylation of AGO3, probably by recruitment to the nuage where methylosome components are located; dimethylation promotes AGO3 dissociation and interaction with other tudor-domain containing proteins such as tud. Required for the recruitment of mael to the perinuclear meiotic nuage. Required for the recruitment of aub to the nuage in testes but not in ovaries. Involved in repression of long interspersed nuclear elements (LINEs) including HeT-A, I-element LINEs and possibly mst40, but not TART LINEs. The chain is Tudor domain-containing protein krimp from Drosophila melanogaster (Fruit fly).